The primary structure comprises 165 residues: Putative TRAP transporter small permease protein HI_0051 (165 aa).

The next 4 membrane-spanning stretches (helical) occupy residues 20 to 40 (LEYLSILALVIMISLVFFNSV), 51 to 71 (FSEEFSRICFVYMISFGIILV), 94 to 114 (IVLIVANICVLIAMIFIAYGA), and 136 to 156 (LYLAAVISAVSYFFIVMFSMI).

The protein belongs to the TRAP transporter small permease family.

It localises to the cell inner membrane. This chain is Putative TRAP transporter small permease protein HI_0051, found in Haemophilus influenzae (strain ATCC 51907 / DSM 11121 / KW20 / Rd).